A 28-amino-acid polypeptide reads, in one-letter code: Chassatide C11 (28 aa).

Intrachain disulfides connect Cys3–Cys19, Cys7–Cys21, and Cys12–Cys26. The residue at position 16 (Met16) is a Methionine sulfoxide; in form chassatide chaC11A.

This sequence belongs to the cyclotide family. Bracelet subfamily. As to expression, expressed in fruit, pedicel and stem but not in leaf and root (at protein level).

Functionally, chassatide C11: Probably participates in a plant defense mechanism. Active against E.coli ATCC 25922 (MIC=8.5 uM) but not against S.aureus ATCC 12600 or S.epidermidis ATCC 14990. Has cytotoxic and hemolytic activity. In terms of biological role, chassatide C11A: Probably participates in a plant defense mechanism. Has no activity against bacteria up to a concentration of 80 uM. Has no cytotoxic and no hemolytic activity. This chain is Chassatide C11, found in Chassalia chartacea (Chassalia curviflora).